Here is a 324-residue protein sequence, read N- to C-terminus: o-succinylbenzoate synthase (324 aa).

The Proton donor role is filled by Lys135. Residues Asp163, Glu192, and Asp215 each coordinate Mg(2+). Lys237 acts as the Proton acceptor in catalysis.

The protein belongs to the mandelate racemase/muconate lactonizing enzyme family. MenC type 1 subfamily. A divalent metal cation is required as a cofactor.

The catalysed reaction is (1R,6R)-6-hydroxy-2-succinyl-cyclohexa-2,4-diene-1-carboxylate = 2-succinylbenzoate + H2O. It participates in quinol/quinone metabolism; 1,4-dihydroxy-2-naphthoate biosynthesis; 1,4-dihydroxy-2-naphthoate from chorismate: step 4/7. The protein operates within quinol/quinone metabolism; menaquinone biosynthesis. In terms of biological role, converts 2-succinyl-6-hydroxy-2,4-cyclohexadiene-1-carboxylate (SHCHC) to 2-succinylbenzoate (OSB). This is o-succinylbenzoate synthase from Aliivibrio fischeri (strain ATCC 700601 / ES114) (Vibrio fischeri).